A 583-amino-acid chain; its full sequence is Ribosomal lysine N-methyltransferase 1 (583 aa).

An SET domain is found at 22–274; it reads EELKFLYTDL…QSRELSNNYG (253 aa). Tyr-273 provides a ligand contact to S-adenosyl-L-methionine. Coiled coils occupy residues 378–407 and 433–459; these read KAEEEDLHDLRARLQGIQMLRNALQSKLNS and KGQKQILKEALTRLKKLEKTMLSENKH.

It belongs to the class V-like SAM-binding methyltransferase superfamily. RKM1 family.

It localises to the cytoplasm. The protein localises to the nucleus. S-adenosyl-L-methionine-dependent protein-lysine N-methyltransferase that monomethylates ribosomal protein S18 (RPS18A and RPS18B) at 'Lys-48' and dimethylates ribosomal protein L23 (RPL23A and RPL23B) at 'Lys-106' and 'Lys-110'. The sequence is that of Ribosomal lysine N-methyltransferase 1 from Saccharomyces cerevisiae (strain ATCC 204508 / S288c) (Baker's yeast).